A 274-amino-acid chain; its full sequence is MQSLHGNCLIAYARHKYILTMVNGEYRYFNGGDLVFADASQIRVDKCVENFVLVSRDTLSLFLPMLKEEALNLHAHKKISSLLVHHCSRDIPVFQEVAQLSQNKNLRYAEMLRKRALIFALLSVFLEDEHFIPLLLNVLQPNMRTRVCTVINNNIAHEWTLARIASELLMSPSLLKKKLREEETSYSQLLTECRMQRALQLIVIHGFSIKRVAVSCGYHSVSYFIYVFRNYYGMTPTEYQERSAQGLPNRDSAASIVAQGNFYGTNRSAEGIRL.

Positions 145 to 242 (TRVCTVINNN…GMTPTEYQER (98 aa)) constitute an HTH araC/xylS-type domain. 2 consecutive DNA-binding regions (H-T-H motif) follow at residues 162–183 (ARIA…REEE) and 209–232 (IKRV…RNYY).

As to quaternary structure, homodimer.

Positively regulates the expression of about fifteen genes involved in acid resistance such as gadA, gadB and gadC. Depending on the conditions (growth phase and medium), can repress gadW. This Shigella flexneri protein is HTH-type transcriptional regulator GadX (gadX).